Consider the following 227-residue polypeptide: NDR1/HIN1-like protein 10 (227 aa).

Residues 42 to 62 traverse the membrane as a helical segment; it reads VKVIISLIVILGVAALIFWLI. N-linked (GlcNAc...) asparagine glycosylation is found at asparagine 138 and asparagine 210.

Expressed in senescing leaves.

Its subcellular location is the cell membrane. Its function is as follows. May play a role in plant immunity. The chain is NDR1/HIN1-like protein 10 from Arabidopsis thaliana (Mouse-ear cress).